Consider the following 623-residue polypeptide: Zinc finger protein 143 (623 aa).

C2H2-type zinc fingers lie at residues 230 to 254 (FRCEHEGCGKLYTTAHHLKVHERSH), 260 to 284 (YICDHLGCGKKFATGYGLKSHVRTH), 290 to 314 (YRCQELNCLKSFKTSGDLQKHTRTH), 320 to 344 (FKCPFEGCGRSFTTSNIRKVHIRTH), 350 to 374 (YYCAEPNCGRAFASATNYKNHMRIH), 380 to 404 (YVCTVPGCDKRFTEYSSLYKHHVVH), and 410 to 433 (YNCNHCGKTYKQISTLAMHKRTAH).

This sequence belongs to the GLI C2H2-type zinc-finger protein family.

The protein resides in the nucleus. Its function is as follows. Transcriptional activator. Activates the gene for selenocysteine tRNA (tRNAsec). Binds to the activator element (AE) motif of the selenocysteine tRNA gene promoter. The protein is Zinc finger protein 143 (znf143) of Danio rerio (Zebrafish).